A 760-amino-acid polypeptide reads, in one-letter code: Endoplasmin homolog (760 aa).

Residues methionine 1 to alanine 23 form the signal peptide. Residues asparagine 95, aspartate 137, asparagine 150, and phenylalanine 187 each contribute to the ATP site. N-linked (GlcNAc...) asparagine glycosylation is present at asparagine 95. A glycan (N-linked (GlcNAc...) asparagine) is linked at asparagine 423. The tract at residues serine 727–leucine 760 is disordered. The span at alanine 741–leucine 760 shows a compositional bias: acidic residues. A Prevents secretion from ER motif is present at residues histidine 757–leucine 760.

Belongs to the heat shock protein 90 family.

Its subcellular location is the endoplasmic reticulum lumen. Its function is as follows. Molecular chaperone that functions in the processing and transport of secreted proteins. The protein is Endoplasmin homolog of Caenorhabditis elegans.